The primary structure comprises 140 residues: Nucleoside diphosphate kinase (140 aa).

The ATP site is built by lysine 11, phenylalanine 59, arginine 87, threonine 93, arginine 104, and asparagine 114. Histidine 117 serves as the catalytic Pros-phosphohistidine intermediate.

This sequence belongs to the NDK family. As to quaternary structure, homotetramer. Mg(2+) serves as cofactor.

The protein localises to the cytoplasm. It carries out the reaction a 2'-deoxyribonucleoside 5'-diphosphate + ATP = a 2'-deoxyribonucleoside 5'-triphosphate + ADP. The catalysed reaction is a ribonucleoside 5'-diphosphate + ATP = a ribonucleoside 5'-triphosphate + ADP. Its function is as follows. Major role in the synthesis of nucleoside triphosphates other than ATP. The ATP gamma phosphate is transferred to the NDP beta phosphate via a ping-pong mechanism, using a phosphorylated active-site intermediate. This chain is Nucleoside diphosphate kinase, found in Gluconobacter oxydans (strain 621H) (Gluconobacter suboxydans).